The chain runs to 145 residues: uncharacterized protein (145 aa).

Residues 104–124 traverse the membrane as a helical segment; the sequence is IEVIILSHHFVIGFSFLLGLL.

The protein localises to the membrane. This is an uncharacterized protein from Saccharomyces cerevisiae (strain ATCC 204508 / S288c) (Baker's yeast).